Reading from the N-terminus, the 261-residue chain is Cytochrome c oxidase subunit 3 (261 aa).

The Mitochondrial matrix portion of the chain corresponds to 1-15; that stretch reads MTHQTHAYHMVNPSP. Residues 16–34 form a helical membrane-spanning segment; the sequence is WPLTGALSALLMTSGLAMW. Topologically, residues 35–40 are mitochondrial intermembrane; sequence FHYNLT. Residues 41–66 form a helical membrane-spanning segment; it reads LLLTLGMTTNLLTMYQWWRDIIREST. The Mitochondrial matrix portion of the chain corresponds to 67 to 72; the sequence is FQGHHT. The chain crosses the membrane as a helical span at residues 73 to 105; the sequence is PIVQKGLRYGMILFIISEVFFFAGFFWAFYHSS. Residues 106-128 lie on the Mitochondrial intermembrane side of the membrane; sequence LAPTPELGGCWPPTGIIPLNPLE. A helical membrane pass occupies residues 129–152; the sequence is VPLLNTSVLLASGVSITWAHHSLM. Over 153–155 the chain is Mitochondrial matrix; it reads EGN. Residues 156–183 form a helical membrane-spanning segment; the sequence is RKHMLQALFITISLGVYFTLLQASEYYE. Topologically, residues 184 to 190 are mitochondrial intermembrane; sequence TSFTISD. Residues 191 to 223 traverse the membrane as a helical segment; the sequence is GVYGSTFFMATGFHGLHVIIGSTFLIVCFLRQL. Residues 224–232 are Mitochondrial matrix-facing; it reads KYHFTSNHH. The helical transmembrane segment at 233-256 threads the bilayer; sequence FGFEAAAWYWHFVDVVWLFLYVSI. Residues 257–261 lie on the Mitochondrial intermembrane side of the membrane; the sequence is YWWGS.

It belongs to the cytochrome c oxidase subunit 3 family. As to quaternary structure, component of the cytochrome c oxidase (complex IV, CIV), a multisubunit enzyme composed of 14 subunits. The complex is composed of a catalytic core of 3 subunits MT-CO1, MT-CO2 and MT-CO3, encoded in the mitochondrial DNA, and 11 supernumerary subunits COX4I, COX5A, COX5B, COX6A, COX6B, COX6C, COX7A, COX7B, COX7C, COX8 and NDUFA4, which are encoded in the nuclear genome. The complex exists as a monomer or a dimer and forms supercomplexes (SCs) in the inner mitochondrial membrane with NADH-ubiquinone oxidoreductase (complex I, CI) and ubiquinol-cytochrome c oxidoreductase (cytochrome b-c1 complex, complex III, CIII), resulting in different assemblies (supercomplex SCI(1)III(2)IV(1) and megacomplex MCI(2)III(2)IV(2)).

Its subcellular location is the mitochondrion inner membrane. It carries out the reaction 4 Fe(II)-[cytochrome c] + O2 + 8 H(+)(in) = 4 Fe(III)-[cytochrome c] + 2 H2O + 4 H(+)(out). Component of the cytochrome c oxidase, the last enzyme in the mitochondrial electron transport chain which drives oxidative phosphorylation. The respiratory chain contains 3 multisubunit complexes succinate dehydrogenase (complex II, CII), ubiquinol-cytochrome c oxidoreductase (cytochrome b-c1 complex, complex III, CIII) and cytochrome c oxidase (complex IV, CIV), that cooperate to transfer electrons derived from NADH and succinate to molecular oxygen, creating an electrochemical gradient over the inner membrane that drives transmembrane transport and the ATP synthase. Cytochrome c oxidase is the component of the respiratory chain that catalyzes the reduction of oxygen to water. Electrons originating from reduced cytochrome c in the intermembrane space (IMS) are transferred via the dinuclear copper A center (CU(A)) of subunit 2 and heme A of subunit 1 to the active site in subunit 1, a binuclear center (BNC) formed by heme A3 and copper B (CU(B)). The BNC reduces molecular oxygen to 2 water molecules using 4 electrons from cytochrome c in the IMS and 4 protons from the mitochondrial matrix. The sequence is that of Cytochrome c oxidase subunit 3 (MT-CO3) from Felis catus (Cat).